The chain runs to 570 residues: Molecular chaperone MKKS (570 aa).

An ATP-binding site is contributed by 192-199 (GHIILGKS). The substrate-binding apical domain stretch occupies residues 198 to 370 (KSLIVPLKGQ…FHLIPNEATI (173 aa)).

Belongs to the TCP-1 chaperonin family. In terms of assembly, component of a complex composed at least of MKKS, BBS10, BBS12, TCP1, CCT2, CCT3, CCT4, CCT5 and CCT8. Interacts with STUB1. Interacts with BBS2 (via coiled coil domain). Interacts with CCDC28B. Interacts with BBS12. Interacts with SMARCC1, a component of the SWI/SNF complexes; the interaction takes place predominantly in the cytoplasm and may modulate SMARCC1 location. Interacts with DLEC1.

The protein localises to the cytoplasm. It is found in the cytoskeleton. The protein resides in the microtubule organizing center. It localises to the centrosome. Its subcellular location is the cytosol. The protein localises to the nucleus. Its function is as follows. Probable molecular chaperone that assists the folding of proteins upon ATP hydrolysis. Plays a role in the assembly of BBSome, a complex involved in ciliogenesis regulating transports vesicles to the cilia. May play a role in protein processing in limb, cardiac and reproductive system development. May play a role in cytokinesis. In Pongo abelii (Sumatran orangutan), this protein is Molecular chaperone MKKS (MKKS).